The sequence spans 230 residues: Lactate utilization protein C (230 aa).

It belongs to the LutC/YkgG family.

Functionally, is involved in L-lactate degradation and allows cells to grow with lactate as the sole carbon source. The sequence is that of Lactate utilization protein C from Exiguobacterium sp. (strain ATCC BAA-1283 / AT1b).